Reading from the N-terminus, the 253-residue chain is Zinc import ATP-binding protein ZnuC (253 aa).

Residues Val-6–Ala-227 form the ABC transporter domain. Gly-38 to Ser-45 is an ATP binding site.

The protein belongs to the ABC transporter superfamily. Zinc importer (TC 3.A.1.15.5) family. As to quaternary structure, the complex is composed of two ATP-binding proteins (ZnuC), two transmembrane proteins (ZnuB) and a solute-binding protein (ZnuA).

The protein localises to the cell inner membrane. It carries out the reaction Zn(2+)(out) + ATP(in) + H2O(in) = Zn(2+)(in) + ADP(in) + phosphate(in) + H(+)(in). Functionally, part of the ABC transporter complex ZnuABC involved in zinc import. Responsible for energy coupling to the transport system. This is Zinc import ATP-binding protein ZnuC from Yersinia pseudotuberculosis serotype I (strain IP32953).